The primary structure comprises 271 residues: Transmembrane protein 150A (271 aa).

Over 1-2 the chain is Cytoplasmic; the sequence is MT. Residues 3 to 23 form a helical membrane-spanning segment; that stretch reads AWILLPVSLSAFSITGIWTVY. The Extracellular segment spans residues 24-75; the sequence is AMAVMNHHVCPVENWSYNESCPPDPAEQGGPKTCCTLDDVPLISKCGSYPPE. Asn-37 and Asn-41 each carry an N-linked (GlcNAc...) asparagine glycan. Residues 76-96 traverse the membrane as a helical segment; that stretch reads SCLFSLIGNMGAFMVALICLL. At 97 to 108 the chain is on the cytoplasmic side; the sequence is RYGQLLEQSRHS. A helical transmembrane segment spans residues 109-129; it reads WVNTTALITGCTNAAGLLVVG. Topologically, residues 130-140 are extracellular; it reads NFQVDHARSLH. A helical transmembrane segment spans residues 141-161; it reads YVGAGVAFPAGLLFVCLHCAL. Residues 162 to 178 are Cytoplasmic-facing; it reads SYQGATAPLDLAVAYLR. Residues 179–199 form a helical membrane-spanning segment; it reads SVLAVIAFITLVLSGVFFVHE. The Extracellular segment spans residues 200–211; it reads SSQLQHGAALCE. The helical transmembrane segment at 212–232 threads the bilayer; it reads WVCVIDILIFYGTFSYEFGAV. Over 233–271 the chain is Cytoplasmic; sequence SSDTLVAALQPTPGRACKSSGSSSTSTHLNCAPESIAMI.

The protein belongs to the DRAM/TMEM150 family. As to quaternary structure, interacts (via C-terminal cytoplasmic tail) with PI4KA.

The protein localises to the cell membrane. Functionally, regulates localization of phosphatidylinositol 4-kinase (PI4K) to the plasma membrane, possibly by reducing the association of TTC7 (TTC7A or TTC7B) with the PI4K complex. Acts as a regulator of phosphatidylinositol 4-phosphate (PtdIns(4)P) synthesis. May also play a role in fasting-induced catabolism. The sequence is that of Transmembrane protein 150A (TMEM150A) from Homo sapiens (Human).